Consider the following 658-residue polypeptide: Staphylocoagulase (658 aa).

Positions 1-26 (MKKQIISLGALAVASSLFTWDNKADA) are cleaved as a signal peptide. Composition is skewed to polar residues over residues 391–406 (MEQN…TQPT), 428–440 (GTES…QGES), 499–514 (PSET…QDGT), and 521–531 (PTQNKPSETNA). A disordered region spans residues 391–531 (MEQNRPSLSD…TQNKPSETNA (141 aa)). 6 repeat units span residues 492-518 (ARPR…VSYG), 519-545 (ARPT…VSYG), 546-572 (ARPT…VSYG), 573-599 (ARPT…VSYG), 600-626 (ARPT…VSYG), and 627-653 (ARPT…ATYG). A 6 X 27 AA tandem repeats of A-R-P-[RT]-[FQY]-[NK]-K-P-S-[EK]-T-N-A-Y-N-V-T-T-[NH]-[QA]-[DN]-G-[TQ]-[VA]-[ST]-Y-G region spans residues 492–653 (ARPRFNKPSE…THADGTATYG (162 aa)). The tract at residues 619–658 (ANGQVSYGARPTQKKPSETNAYNVTTHADGTATYGPRVTK) is disordered. Over residues 636 to 646 (ETNAYNVTTHA) the composition is skewed to polar residues.

This sequence belongs to the staphylocoagulase family.

Its function is as follows. Staphylocoagulase is an extracellular protein which specifically forms a complex with human prothrombin. This complex named staphylothrombin can clot fibrinogen without any proteolytic cleavage of prothrombin. The protein is Staphylocoagulase of Staphylococcus aureus.